Consider the following 89-residue polypeptide: uncharacterized protein (89 aa).

To M.jannaschii MJ1436.

This is an uncharacterized protein from Methanothermobacter thermautotrophicus (strain ATCC 29096 / DSM 1053 / JCM 10044 / NBRC 100330 / Delta H) (Methanobacterium thermoautotrophicum).